The following is a 300-amino-acid chain: Ribosomal protein L11 methyltransferase (300 aa).

Residues Thr-147, Gly-168, Asp-190, and Asn-236 each contribute to the S-adenosyl-L-methionine site.

The protein belongs to the methyltransferase superfamily. PrmA family.

Its subcellular location is the cytoplasm. It carries out the reaction L-lysyl-[protein] + 3 S-adenosyl-L-methionine = N(6),N(6),N(6)-trimethyl-L-lysyl-[protein] + 3 S-adenosyl-L-homocysteine + 3 H(+). Methylates ribosomal protein L11. This Leptospira interrogans serogroup Icterohaemorrhagiae serovar Lai (strain 56601) protein is Ribosomal protein L11 methyltransferase.